Reading from the N-terminus, the 507-residue chain is ATP synthase subunit alpha, chloroplastic (507 aa).

Residue 170–177 participates in ATP binding; that stretch reads GDRQTGKT.

This sequence belongs to the ATPase alpha/beta chains family. As to quaternary structure, F-type ATPases have 2 components, CF(1) - the catalytic core - and CF(0) - the membrane proton channel. CF(1) has five subunits: alpha(3), beta(3), gamma(1), delta(1), epsilon(1). CF(0) has four main subunits: a, b, b' and c.

Its subcellular location is the plastid. The protein resides in the chloroplast thylakoid membrane. The catalysed reaction is ATP + H2O + 4 H(+)(in) = ADP + phosphate + 5 H(+)(out). Functionally, produces ATP from ADP in the presence of a proton gradient across the membrane. The alpha chain is a regulatory subunit. The protein is ATP synthase subunit alpha, chloroplastic of Piper cenocladum (Ant piper).